The primary structure comprises 691 residues: Glycine--tRNA ligase beta subunit (691 aa).

The protein belongs to the class-II aminoacyl-tRNA synthetase family. In terms of assembly, tetramer of two alpha and two beta subunits.

Its subcellular location is the cytoplasm. The catalysed reaction is tRNA(Gly) + glycine + ATP = glycyl-tRNA(Gly) + AMP + diphosphate. The sequence is that of Glycine--tRNA ligase beta subunit from Buchnera aphidicola subsp. Schizaphis graminum (strain Sg).